Reading from the N-terminus, the 184-residue chain is Muscle-specific protein 20 (184 aa).

Positions 17–122 constitute a Calponin-homology (CH) domain; the sequence is PEMDKEAQEW…NTIFALGRAT (106 aa). The stretch at 157-181 is one Calponin-like repeat; the sequence is VGLQAGSNKGATQAGQNLGAGRKIL.

It belongs to the calponin family. Found in synchronous muscle; not found in asynchronous indirect flight muscle.

The polypeptide is Muscle-specific protein 20 (Mp20) (Drosophila melanogaster (Fruit fly)).